A 350-amino-acid polypeptide reads, in one-letter code: [LysW]-L-2-aminoadipate/[LysW]-L-glutamate phosphate reductase (350 aa).

NADP(+) is bound at residue 10–13 (SGYT). The active site involves Cys150. Position 317 (Asn317) interacts with NADP(+).

This sequence belongs to the NAGSA dehydrogenase family. Type 1 subfamily. LysY sub-subfamily.

The protein resides in the cytoplasm. The enzyme catalyses [amino-group carrier protein]-C-terminal-N-(1-carboxy-5-oxopentan-1-yl)-L-glutamine + phosphate + NADP(+) = [amino-group carrier protein]-C-terminal-N-(1-carboxy-5-phosphooxy-5-oxopentan-1-yl)-L-glutamine + NADPH + H(+). It carries out the reaction [amino-group carrier protein]-C-terminal-gamma-(L-glutamyl-5-semialdehyde)-L-glutamate + phosphate + NADP(+) = [amino-group carrier protein]-C-terminal-gamma-(5-phospho-L-glutamyl)-L-glutamate + NADPH + H(+). It participates in amino-acid biosynthesis; L-lysine biosynthesis via AAA pathway; L-lysine from L-alpha-aminoadipate (Thermus route): step 3/5. The protein operates within amino-acid biosynthesis; L-arginine biosynthesis. Its function is as follows. Involved in both the arginine and lysine biosynthetic pathways. The chain is [LysW]-L-2-aminoadipate/[LysW]-L-glutamate phosphate reductase from Sulfolobus acidocaldarius (strain ATCC 33909 / DSM 639 / JCM 8929 / NBRC 15157 / NCIMB 11770).